Here is a 327-residue protein sequence, read N- to C-terminus: Endo-1,4-beta-xylanase C (327 aa).

The signal sequence occupies residues methionine 1–alanine 15. Positions threonine 43 to alanine 325 constitute a GH10 domain. Glutamate 154 (proton donor) is an active-site residue. Glutamate 262 acts as the Nucleophile in catalysis. The cysteines at positions 280 and 286 are disulfide-linked.

This sequence belongs to the glycosyl hydrolase 10 (cellulase F) family.

Its subcellular location is the secreted. The catalysed reaction is Endohydrolysis of (1-&gt;4)-beta-D-xylosidic linkages in xylans.. Its pathway is glycan degradation; xylan degradation. With respect to regulation, weakly inhibited by the wheat xylanase inhibiting protein I (XIP-I). Its function is as follows. Endo-1,4-beta-xylanase involved in the hydrolysis of xylan, a major structural heterogeneous polysaccharide found in plant biomass representing the second most abundant polysaccharide in the biosphere, after cellulose. Plays an important role in causing fusarium head blight (FHB) on cereal crops. In Gibberella zeae (strain ATCC MYA-4620 / CBS 123657 / FGSC 9075 / NRRL 31084 / PH-1) (Wheat head blight fungus), this protein is Endo-1,4-beta-xylanase C (XYLC).